Here is a 136-residue protein sequence, read N- to C-terminus: MHSTIVYACLLALAVFVALHGTPLAALAENGEGTTQPDYDNSTDYYNYEDFKCTCPAPHLNNTNGTVMKPIGCYYTCNVTRCTAPDTYPCYNLTEHQAKNLTTSPTTLCAVGNCDHGICVPNGTKELCFKAPNLEE.

The N-terminal stretch at 1–28 (MHSTIVYACLLALAVFVALHGTPLAALA) is a signal peptide. 7 N-linked (GlcNAc...) asparagine glycosylation sites follow: asparagine 41, asparagine 61, asparagine 64, asparagine 78, asparagine 92, asparagine 100, and asparagine 122. Cystine bridges form between cysteine 55–cysteine 77, cysteine 73–cysteine 114, cysteine 90–cysteine 119, and cysteine 109–cysteine 128.

It is found in the secreted. In terms of biological role, salivary chemokine-binding protein which has chemokine-neutralizing activity and binds to host chemokines CCL2, CCL3, CCL3L1, CCL4, CCL4L1, CCL5, CCL6, CCL7, CCL8, CCL9, CCL11, CCL12, CCL13, CCL14, CCL16, CCL17, CCL18, CCL19, CCL22, CCL23, CCL24 and CCL27. The chain is Evasin P991 from Amblyomma cajennense (Cayenne tick).